Here is a 436-residue protein sequence, read N- to C-terminus: GTPase Der (436 aa).

EngA-type G domains are found at residues 4–167 and 176–351; these read PVVA…KNIP and VQFC…ENHS. GTP-binding positions include 10-17, 57-61, 119-122, 182-189, 229-233, and 294-297; these read GRPNVGKS, DTGGI, NKLD, DTAGM, and NKWD. In terms of domain architecture, KH-like spans 352–436; sequence LRVQTNVLND…PIKIFARARK (85 aa).

The protein belongs to the TRAFAC class TrmE-Era-EngA-EngB-Septin-like GTPase superfamily. EngA (Der) GTPase family. In terms of assembly, associates with the 50S ribosomal subunit.

Its function is as follows. GTPase that plays an essential role in the late steps of ribosome biogenesis. This is GTPase Der from Bacillus velezensis (strain DSM 23117 / BGSC 10A6 / LMG 26770 / FZB42) (Bacillus amyloliquefaciens subsp. plantarum).